Consider the following 255-residue polypeptide: MPLTKRIIPCLDVKDGRVVKGVSFQNLRDAGDPVELAAYYQEQGADEIVFLDISATPEGRETMIEVVRRTAENLSIPLTVGGGVRSLEHIEKLLKAGADKVSINTAAVKNPLLITAAAEEFGSQAVVVAIDAKRKGNGWEVYVSAGKVPTGLDAVEWAKKAEELGAGEILLTSIDYDGTQNGYDLELTRAVSEAVKIPVIASGGAGELEHFYAVLTEGKADAALAASVFHYGKFTVGDVKKYLIQRGVPVRPCCW.

Residues Asp-12 and Asp-131 contribute to the active site.

Belongs to the HisA/HisF family. In terms of assembly, heterodimer of HisH and HisF.

Its subcellular location is the cytoplasm. The catalysed reaction is 5-[(5-phospho-1-deoxy-D-ribulos-1-ylimino)methylamino]-1-(5-phospho-beta-D-ribosyl)imidazole-4-carboxamide + L-glutamine = D-erythro-1-(imidazol-4-yl)glycerol 3-phosphate + 5-amino-1-(5-phospho-beta-D-ribosyl)imidazole-4-carboxamide + L-glutamate + H(+). It functions in the pathway amino-acid biosynthesis; L-histidine biosynthesis; L-histidine from 5-phospho-alpha-D-ribose 1-diphosphate: step 5/9. In terms of biological role, IGPS catalyzes the conversion of PRFAR and glutamine to IGP, AICAR and glutamate. The HisF subunit catalyzes the cyclization activity that produces IGP and AICAR from PRFAR using the ammonia provided by the HisH subunit. This chain is Imidazole glycerol phosphate synthase subunit HisF, found in Ignicoccus hospitalis (strain KIN4/I / DSM 18386 / JCM 14125).